The sequence spans 317 residues: MLHIFLSYFYIIFFLIVFPTQLLLLYVIIFHSPKHLKTLKRIFLCNCSCQIFSMITLVLLQARQVSNLNPVELWCYGPLRYLDAIVAYTMYVLCEGTVLMSSILIFITMYVKYEAVRSIHRERSAKFSVIILSLSPLFITMSAEAYLTIEYHLPIEYQEKFSAINSNLGDHTVIGYIALDNIPAQIVFCTICGFFVIFPLIMFCLRRNIILFINSKLDLSSTTMRQQNRALINGLTLQAFLPLFCVCPIFICSFVALITKTEILLEQYFVSVVLLLPTFFEPYITFYTVSHYRKQVRIWLGKENMGSMMLVVSVSRL.

7 helical membrane passes run 9–29 (FYIIFFLIVFPTQLLLLYVII), 42–62 (IFLCNCSCQIFSMITLVLLQA), 91–111 (YVLCEGTVLMSSILIFITMYV), 129–149 (VIILSLSPLFITMSAEAYLTI), 185–205 (QIVFCTICGFFVIFPLIMFCL), 239–259 (AFLPLFCVCPIFICSFVALIT), and 269–289 (FVSVVLLLPTFFEPYITFYTV).

It belongs to the nematode receptor-like protein srd family.

It localises to the membrane. This Caenorhabditis elegans protein is Serpentine receptor class delta-46 (srd-46).